The primary structure comprises 359 residues: Endosome-associated-trafficking regulator 1 (359 aa).

S18 and S74 each carry phosphoserine. Residues 100-125 (LLDEDEDEEDGWNGAYLPSAMEQTHS) form a required for interaction with PTPN13 region. The disordered stretch occupies residues 153–180 (SLPPWTLSDSDSRISPTGSPSADFTAHG). A compositionally biased stretch (polar residues) spans 159–174 (LSDSDSRISPTGSPSA). Phosphoserine occurs at positions 167 and 171. Positions 185–295 (DRHLRTLQIS…FKRENEALRS (111 aa)) form a coiled coil.

It belongs to the ENTR1 family. Found in a complex with ENTR1, PTPN13 and GIT1. Interacts with PTPN13 (via the FERM domain). Interacts (via N-terminus) with GIT1 (via N- and C-terminus); this interaction is direct. Interacts with NOD2. Interacts (via N-terminus) with IFT88. Interacts with VPS35. In terms of processing, phosphorylated.

The protein localises to the cytoplasm. Its subcellular location is the early endosome. It localises to the endosome. It is found in the recycling endosome. The protein resides in the midbody. The protein localises to the cytoskeleton. Its subcellular location is the microtubule organizing center. It localises to the centrosome. It is found in the cilium basal body. Endosome-associated protein that plays a role in membrane receptor sorting, cytokinesis and ciliogenesis. Involved in the endosome-to-plasma membrane trafficking and recycling of SNX27-retromer-dependent cargo proteins, such as GLUT1. Involved in the regulation of cytokinesis; the function may involve PTPN13 and GIT1. Plays a role in the formation of cilia. Involved in cargo protein localization, such as PKD2, at primary cilia. Involved in the presentation of the tumor necrosis factor (TNF) receptor TNFRSF1A on the cell surface, and hence in the modulation of the TNF-induced apoptosis. In Bos taurus (Bovine), this protein is Endosome-associated-trafficking regulator 1.